The primary structure comprises 260 residues: Indole-3-glycerol phosphate synthase (260 aa).

This sequence belongs to the TrpC family.

It carries out the reaction 1-(2-carboxyphenylamino)-1-deoxy-D-ribulose 5-phosphate + H(+) = (1S,2R)-1-C-(indol-3-yl)glycerol 3-phosphate + CO2 + H2O. It participates in amino-acid biosynthesis; L-tryptophan biosynthesis; L-tryptophan from chorismate: step 4/5. The polypeptide is Indole-3-glycerol phosphate synthase (Thermoanaerobacter sp. (strain X514)).